The sequence spans 187 residues: Ribose 1,5-bisphosphate phosphokinase PhnN (187 aa).

10–17 provides a ligand contact to ATP; sequence GPSGSGKD.

The protein belongs to the ribose 1,5-bisphosphokinase family.

It carries out the reaction alpha-D-ribose 1,5-bisphosphate + ATP = 5-phospho-alpha-D-ribose 1-diphosphate + ADP. Its pathway is metabolic intermediate biosynthesis; 5-phospho-alpha-D-ribose 1-diphosphate biosynthesis; 5-phospho-alpha-D-ribose 1-diphosphate from D-ribose 5-phosphate (route II): step 3/3. In terms of biological role, catalyzes the phosphorylation of ribose 1,5-bisphosphate to 5-phospho-D-ribosyl alpha-1-diphosphate (PRPP). The chain is Ribose 1,5-bisphosphate phosphokinase PhnN from Klebsiella pneumoniae subsp. pneumoniae (strain ATCC 700721 / MGH 78578).